The primary structure comprises 84 residues: Small ribosomal subunit protein uS17 (84 aa).

This sequence belongs to the universal ribosomal protein uS17 family. In terms of assembly, part of the 30S ribosomal subunit.

Functionally, one of the primary rRNA binding proteins, it binds specifically to the 5'-end of 16S ribosomal RNA. In Aliivibrio salmonicida (strain LFI1238) (Vibrio salmonicida (strain LFI1238)), this protein is Small ribosomal subunit protein uS17.